A 452-amino-acid chain; its full sequence is Maltoporin (452 aa).

The first 25 residues, 1–25 (MMITLRKLPLAVAVAAGVMSAQAMA), serve as a signal peptide directing secretion.

The protein belongs to the porin LamB (TC 1.B.3) family. As to quaternary structure, homotrimer formed of three 18-stranded antiparallel beta-barrels, containing three independent channels.

The protein resides in the cell outer membrane. The catalysed reaction is beta-maltose(in) = beta-maltose(out). In terms of biological role, involved in the transport of maltose and maltodextrins. This is Maltoporin from Salmonella heidelberg (strain SL476).